Consider the following 156-residue polypeptide: Peroxisome assembly protein 22 (156 aa).

A helical transmembrane segment spans residues L24–Y46.

This sequence belongs to the peroxin-22 family.

The protein localises to the peroxisome membrane. Functionally, involved in peroxisome biogenesis. The protein is Peroxisome assembly protein 22 (PEX22) of Kluyveromyces lactis (strain ATCC 8585 / CBS 2359 / DSM 70799 / NBRC 1267 / NRRL Y-1140 / WM37) (Yeast).